The primary structure comprises 122 residues: Diacylglycerol kinase (122 aa).

Residues R10 and Y17 each coordinate ATP. Substrate contacts are provided by residues R10, 14 to 19 (AAGYSW), and 23 to 26 (RAAW). E29 provides a ligand contact to ATP. E29 lines the a divalent metal cation pocket. Substrate-binding positions include 31–35 (AFRQE), 48–51 (WLDV), R56, and E70. The chain crosses the membrane as a helical span at residues 35 to 55 (EGVAVLLAVVIACWLDVDAIT). A helical transmembrane segment spans residues 57–77 (VLLISSVMLVMIVEILNSAIE). E70 acts as the Proton acceptor in catalysis. Residues E77, 86-88 (EYH), and 95-96 (KD) each bind ATP. Residue E77 participates in a divalent metal cation binding. The chain crosses the membrane as a helical span at residues 98–118 (GSAAVLIAIIVAVITWCILLW). Substrate-binding positions include S99 and 113–118 (WCILLW).

It belongs to the bacterial diacylglycerol kinase family. It depends on Mg(2+) as a cofactor.

It localises to the cell inner membrane. The catalysed reaction is a 1,2-diacyl-sn-glycerol + ATP = a 1,2-diacyl-sn-glycero-3-phosphate + ADP + H(+). Its function is as follows. Catalyzes the ATP-dependent phosphorylation of sn-l,2-diacylglycerol (DAG) to phosphatidic acid. Involved in the recycling of diacylglycerol produced as a by-product during membrane-derived oligosaccharide (MDO) biosynthesis. In Shigella flexneri, this protein is Diacylglycerol kinase (dgkA).